The primary structure comprises 135 residues: Endoribonuclease YbeY (135 aa).

Positions 102, 106, and 112 each coordinate Zn(2+).

Belongs to the endoribonuclease YbeY family. Requires Zn(2+) as cofactor.

Its subcellular location is the cytoplasm. Single strand-specific metallo-endoribonuclease involved in late-stage 70S ribosome quality control and in maturation of the 3' terminus of the 16S rRNA. This is Endoribonuclease YbeY from Rubrobacter xylanophilus (strain DSM 9941 / JCM 11954 / NBRC 16129 / PRD-1).